A 1042-amino-acid chain; its full sequence is Probable inorganic carbon transporter subunit DabA (1042 aa).

Positions 462, 464, 721, and 736 each coordinate Zn(2+).

Belongs to the inorganic carbon transporter (TC 9.A.2) DabA family. As to quaternary structure, forms a complex with DabB. It depends on Zn(2+) as a cofactor.

It localises to the cell inner membrane. Functionally, part of an energy-coupled inorganic carbon pump. The polypeptide is Probable inorganic carbon transporter subunit DabA (Nitrosomonas eutropha (strain DSM 101675 / C91 / Nm57)).